A 327-amino-acid polypeptide reads, in one-letter code: MSVDAAVVKNEDKYIPTIDLRDYFDAYSEEKRAKVIEQVRKACLEHGFFQVEGHGVPVESQRRMFAACKALFDLPLEKKRRISLYKYSWRRGYEGPGEQQANDPHHGDFERDAKEGFFVGKELPLDQVDFGKGPNVWPPDLAENDFHRPVMEYYEHARKVGFKVMELLAVSLGHPPSILKDFTTDAAMFLKLLRYPAHTWTDTRKFGSGQHTDYGGITILLQDPGQDGLEVWHEATQQWVELPALEDKFVINLGDMVQRWTGGKYKSTLHRVINKTGGERYAVPAFWHGDLDAKNPLDPNDTSDETVLEFIKKKFYKGYGLTDDTSL.

The 108-residue stretch at 183–290 folds into the Fe2OG dioxygenase domain; that stretch reads TTDAAMFLKL…YAVPAFWHGD (108 aa). Residues His211, Asp213, and His270 each coordinate Fe cation. 2-oxoglutarate is bound at residue Arg280.

This sequence belongs to the iron/ascorbate-dependent oxidoreductase family. Requires Fe(2+) as cofactor.

It participates in secondary metabolite biosynthesis. Its function is as follows. 2-oxoglutarate-dependent dioxygenase; part of the tra gene cluster that produces terrestric acid. The clavatol biosynthesis cluster cla and the terrestric acid cluster tra are both involved in the production of peniphenones and penilactones. The non-reducing PKS claF is responsible for the formation of clavatol from successive condensations of 3 malonyl-CoA units, presumably with a simple acetyl-CoA starter unit, and 2 methylation steps. The esterase claE probably collaborates with claF by catalyzing the hydrolysis of ACP-bound acyl intermediates to free the ACP from stalled intermediates. The clavatol oxidase claD then converts clavatol to hydroxyclavatol. Spontaneous dehydration of hydroxyclavatol leads to the accumulation of the highly active ortho-quinone methide. On the other hand, the PKS-NRPS hybrid traA is involved in the formation of crustosic acid, with the help of traB and traD. The polyketide synthase module (PKS) of traA is responsible for the synthesis of the polyketide backbone via the condensation of an acetyl-CoA starter unit with 3 malonyl-CoA units. The downstream nonribosomal peptide synthetase (NRPS) module then amidates the carboxyl end of the polyketide with L-malic acid. Because traA lacks a designated enoylreductase (ER) domain, the required activity is provided the enoyl reductase traG. Crustosic acid undergoes decarboxylation and isomerization to the terrestric acid, catalyzed by the 2-oxoglutarate-dependent dioxygenase traH. Both acids are further converted to the 2 gamma-butyrolactones (R)-5-methyltetronic acid and (S)-5-carboxylmethyltetronic acid, with involvement of the cytochrome P450 monooxygenase claJ. Spontaneous addition of the methide to these gamma-butyrolactones leads to peniphenone D and penilactone D, which undergo again stereospecific attacking by methide to give penilactones A and B. In Penicillium crustosum (Blue mold fungus), this protein is 2-oxoglutarate-dependent dioxygenase traH.